Reading from the N-terminus, the 100-residue chain is NADH-quinone oxidoreductase subunit K (100 aa).

3 consecutive transmembrane segments (helical) span residues 4–24 (YEYY…GIII), 29–49 (IAML…FVAF), and 60–80 (VFVF…LGLI).

This sequence belongs to the complex I subunit 4L family. In terms of assembly, NDH-1 is composed of 14 different subunits. Subunits NuoA, H, J, K, L, M, N constitute the membrane sector of the complex.

The protein localises to the cell inner membrane. It carries out the reaction a quinone + NADH + 5 H(+)(in) = a quinol + NAD(+) + 4 H(+)(out). Functionally, NDH-1 shuttles electrons from NADH, via FMN and iron-sulfur (Fe-S) centers, to quinones in the respiratory chain. The immediate electron acceptor for the enzyme in this species is believed to be ubiquinone. Couples the redox reaction to proton translocation (for every two electrons transferred, four hydrogen ions are translocated across the cytoplasmic membrane), and thus conserves the redox energy in a proton gradient. The protein is NADH-quinone oxidoreductase subunit K of Persephonella marina (strain DSM 14350 / EX-H1).